Reading from the N-terminus, the 153-residue chain is Ribosome maturation factor RimP (153 aa).

This sequence belongs to the RimP family.

The protein localises to the cytoplasm. Required for maturation of 30S ribosomal subunits. The sequence is that of Ribosome maturation factor RimP from Clostridioides difficile (strain 630) (Peptoclostridium difficile).